The sequence spans 241 residues: Triosephosphate isomerase (241 aa).

9 to 11 serves as a coordination point for substrate; that stretch reads NWK. His96 functions as the Electrophile in the catalytic mechanism. Catalysis depends on Glu165, which acts as the Proton acceptor. Substrate is bound by residues Gly171, Ser204, and 225–226; that span reads GG.

The protein belongs to the triosephosphate isomerase family. In terms of assembly, homodimer.

The protein localises to the cytoplasm. It catalyses the reaction D-glyceraldehyde 3-phosphate = dihydroxyacetone phosphate. The protein operates within carbohydrate biosynthesis; gluconeogenesis. Its pathway is carbohydrate degradation; glycolysis; D-glyceraldehyde 3-phosphate from glycerone phosphate: step 1/1. Involved in the gluconeogenesis. Catalyzes stereospecifically the conversion of dihydroxyacetone phosphate (DHAP) to D-glyceraldehyde-3-phosphate (G3P). The sequence is that of Triosephosphate isomerase from Prochlorococcus marinus (strain MIT 9301).